Consider the following 278-residue polypeptide: Putative glycosyltransferase EpsE (278 aa).

It belongs to the glycosyltransferase 2 family.

Functionally, may be involved in the production of the exopolysaccharide (EPS) component of the extracellular matrix during biofilm formation. EPS is responsible for the adhesion of chains of cells into bundles. Required for biofilm maintenance. This is Putative glycosyltransferase EpsE (epsE) from Bacillus subtilis (strain 168).